Here is a 1075-residue protein sequence, read N- to C-terminus: Disheveled-associated activator of morphogenesis 2 (1075 aa).

The GBD/FH3 domain maps to 40–416 (VPIPPTEELN…QIVLQDERGD (377 aa)). The stretch at 437–517 (NENEVKQWRD…VAQLNEYSQG (81 aa)) forms a coiled coil. Disordered regions lie at residues 517–611 (GGSI…IPQP), 1006–1025 (KEQR…SISE), and 1048–1075 (SKLK…KLNY). Over residues 523–532 (PAPPPPPPGG) the composition is skewed to pro residues. Low complexity predominate over residues 533–544 (PLALSSALSSAL). Residues 550-581 (PPLPPPLPFSSCPPPPAPPPPPGGPPPPPGAP) show a composition bias toward pro residues. In terms of domain architecture, FH2 spans 605 to 1075 (KKSIPQPSHP…RERVVTKLNY (471 aa)). The DAD domain maps to 1025–1075 (EETGEFDDLVSALRSGEVFDKDLSKLKRNRKRSGNQGLETSRERVVTKLNY). Over residues 1064 to 1075 (TSRERVVTKLNY) the composition is skewed to basic and acidic residues.

It belongs to the formin homology family. In terms of tissue distribution, expressed in progenitor populations of the embryonic spinal cord (at protein level).

In terms of biological role, key regulator of the Wnt signaling pathway, which is required for various processes during development, such as dorsal patterning, determination of left/right symmetry or myelination in the central nervous system. Acts downstream of Wnt ligands and upstream of beta-catenin (CTNNB1). Required for canonical Wnt signaling pathway during patterning in the dorsal spinal cord by promoting the aggregation of Disheveled (Dvl) complexes, thereby clustering and formation of Wnt receptor signalosomes and potentiating Wnt activity. During dorsal patterning of the spinal cord, inhibits oligodendrocytes differentiation via interaction with PIP5K1A. Also regulates non-canonical Wnt signaling pathway. Acts downstream of PITX2 in the developing gut and is required for left/right asymmetry within dorsal mesentery: affects mesenchymal condensation by lengthening cadherin-based junctions through WNT5A and non-canonical Wnt signaling, inducing polarized condensation in the left dorsal mesentery necessary to initiate gut rotation. Together with DAAM1, required for myocardial maturation and sarcomere assembly. This is Disheveled-associated activator of morphogenesis 2 from Gallus gallus (Chicken).